The sequence spans 73 residues: Putative sodium channel toxin Ts39 (73 aa).

The first 22 residues, 1-22 (MKTLNFCLFLVIISSLTVRVFC), serve as a signal peptide directing secretion. The LCN-type CS-alpha/beta domain occupies 24-73 (NDRFLTVNDNYVICLYINKSFVNCENLCKAYMNAKDGFCRQPHCFCTDVE). 3 disulfide bridges follow: cysteine 37-cysteine 62, cysteine 47-cysteine 67, and cysteine 51-cysteine 69.

The protein belongs to the long (3 C-C) scorpion toxin superfamily. Sodium channel inhibitor family. As to expression, expressed by the venom gland.

The protein localises to the secreted. Functionally, putative sodium channel toxin. This Tityus serrulatus (Brazilian scorpion) protein is Putative sodium channel toxin Ts39.